Reading from the N-terminus, the 561-residue chain is DNA ligase B (561 aa).

The N6-AMP-lysine intermediate role is filled by lysine 125.

The protein belongs to the NAD-dependent DNA ligase family. LigB subfamily.

It carries out the reaction NAD(+) + (deoxyribonucleotide)n-3'-hydroxyl + 5'-phospho-(deoxyribonucleotide)m = (deoxyribonucleotide)n+m + AMP + beta-nicotinamide D-nucleotide.. Catalyzes the formation of phosphodiester linkages between 5'-phosphoryl and 3'-hydroxyl groups in double-stranded DNA using NAD as a coenzyme and as the energy source for the reaction. This is DNA ligase B from Salmonella choleraesuis (strain SC-B67).